The primary structure comprises 61 residues: Small ribosomal subunit protein uS14 (61 aa).

Zn(2+)-binding residues include C24, C27, C40, and C43.

Belongs to the universal ribosomal protein uS14 family. Zinc-binding uS14 subfamily. As to quaternary structure, part of the 30S ribosomal subunit. Contacts proteins S3 and S10. Zn(2+) serves as cofactor.

In terms of biological role, binds 16S rRNA, required for the assembly of 30S particles and may also be responsible for determining the conformation of the 16S rRNA at the A site. This Limosilactobacillus fermentum (strain NBRC 3956 / LMG 18251) (Lactobacillus fermentum) protein is Small ribosomal subunit protein uS14.